Consider the following 2275-residue polypeptide: Serine-rich adhesin for platelets (2275 aa).

The N-terminal stretch at 1 to 89 (MSKRQKEFHD…VNMLHDQQAF (89 aa)) is a signal peptide. Residues 90–264 (AASDAPLTSE…TANTITVNKD (175 aa)) form a serine-rich repeat region 1, SRR1 region. Residues 100–111 (LNTQSETVGNQN) are compositionally biased toward polar residues. Disordered regions lie at residues 100-229 (LNTQ…STST) and 751-2247 (NSMS…GLLG). Residues 112-128 (STTIEASTSTADSTSVT) show a composition bias toward low complexity. The span at 129–140 (KNSSSVQTSNSD) shows a compositional bias: polar residues. A compositionally biased stretch (low complexity) spans 150 to 229 (VTSTTNSTSN…NKTSTTSTST (80 aa)). The tract at residues 265–751 (NLKQYMTTSG…TTFKYEVTRN (487 aa)) is non-repeat region (NRR). Low complexity-rich tracts occupy residues 752–1392 (SMSD…LSLS) and 1402–2218 (SNSA…ATSE). Residues 752–2236 (SMSDSVSTSG…AQSEKRLPDT (1485 aa)) form a serine-rich repeat region 2, SRR2 region. The LPXTG sorting signal motif lies at 2233 to 2237 (LPDTG). T2236 carries the pentaglycyl murein peptidoglycan amidated threonine modification. Residues 2237-2275 (GDSIKQNGLLGGVMTLLVGLGLMKRKKKKDENDQDDSQA) constitute a propeptide, removed by sortase.

Belongs to the serine-rich repeat protein (SRRP) family. As to quaternary structure, interacts with human gp-340 (DMBT1). Post-translationally, proteolytically cleaved by a metalloprotease. Glycosylated. It is probable that most of the Ser residues in SSR1 and SSR2 are O-GlcNAcylated. Sequential glycosylation by sugar transferases are able to generate complex sugar polymorphisms.

The protein localises to the secreted. It localises to the cell wall. Mediates binding to human platelets, possibly through a receptor-ligand interaction. Probably associated with virulence in endovascular infection. Interacts with host (human) gp-340 via the non-repeat region (NRR or binding region). Binding is inhibited by N-acetylneuraminic acid (NeuAc). The chain is Serine-rich adhesin for platelets (sraP) from Staphylococcus aureus (strain MW2).